A 581-amino-acid chain; its full sequence is Proline--tRNA ligase (581 aa).

The protein belongs to the class-II aminoacyl-tRNA synthetase family. ProS type 1 subfamily. As to quaternary structure, homodimer.

The protein localises to the cytoplasm. It catalyses the reaction tRNA(Pro) + L-proline + ATP = L-prolyl-tRNA(Pro) + AMP + diphosphate. In terms of biological role, catalyzes the attachment of proline to tRNA(Pro) in a two-step reaction: proline is first activated by ATP to form Pro-AMP and then transferred to the acceptor end of tRNA(Pro). As ProRS can inadvertently accommodate and process non-cognate amino acids such as alanine and cysteine, to avoid such errors it has two additional distinct editing activities against alanine. One activity is designated as 'pretransfer' editing and involves the tRNA(Pro)-independent hydrolysis of activated Ala-AMP. The other activity is designated 'posttransfer' editing and involves deacylation of mischarged Ala-tRNA(Pro). The misacylated Cys-tRNA(Pro) is not edited by ProRS. This chain is Proline--tRNA ligase, found in Polaromonas naphthalenivorans (strain CJ2).